A 467-amino-acid polypeptide reads, in one-letter code: MAAPDLSTNLQEEATCAICLDYFTDPVMTDCGHNFCRECIRRCWGQPEGPYACPECREVSAQRNLRPNRPLAKMAEMARRLHPPSPVPQGVCAAHREPLTTFCGDDLSLLCPTCERSEHWAHRVRPLQEAADDLKGRLEKSLEHLRKQMEDAMLFQAQAEETCALWQKMVESQRQNVLGEFERLRRLLAEEEQQLLQKLEEEELEVLPRLREGAARLGQQSTQLAALVSELESRCQLPALGLLQDIKDALCRVQDVKLQPPAVVPMELRTVCRVPGLVETLRRFRGDITLDPDTANPELVLSEDRRSVQRGEQRQALPDSPERFDPGPCVLGQERITSGRHYWEVEVGDQTSWALGVCKETVNRKEKGELSAGNGFWILVFLGSFYNSNERAFSPLRDPPKRVGIFLDYEAGHLSFYSATDGSLLFIFPETPFSGTLRPLFSPLSSSPTPMTICRLIGVSGDTLGPQ.

The RING-type zinc finger occupies 16 to 57; the sequence is CAICLDYFTDPVMTDCGHNFCRECIRRCWGQPEGPYACPECR. Ser85 carries the phosphoserine modification. The B box-type zinc finger occupies 87 to 127; it reads VPQGVCAAHREPLTTFCGDDLSLLCPTCERSEHWAHRVRPL. Residues Cys92, His95, Cys114, and His119 each coordinate Zn(2+). Residues 127–207 adopt a coiled-coil conformation; that stretch reads LQEAADDLKG…KLEEEELEVL (81 aa). Residues 267-460 form the B30.2/SPRY domain; that stretch reads ELRTVCRVPG…MTICRLIGVS (194 aa). The segment covering 304–313 has biased composition (basic and acidic residues); that stretch reads DRRSVQRGEQ. The disordered stretch occupies residues 304-325; the sequence is DRRSVQRGEQRQALPDSPERFD.

It belongs to the TRIM/RBCC family. In terms of assembly, binds cytoplasmic tail of integrin alpha-1. Interacts with the HN peptide. Interacts with PHOX2B. Interacts (when autoubiquitinated) with SQSTM1/p62; promoting AIM2 recruitment to autophagosomes. Interacts with AIM2; promoting its autophagy-dependent degradation. Post-translationally, autoubiquitinated upon DNA stimulation; autoubiquitination promotes interaction with SQSTM1/p62 and recruitment of AIM2 to autophagosomes.

The protein localises to the cytoplasm. It is found in the nucleus. It carries out the reaction S-ubiquitinyl-[E2 ubiquitin-conjugating enzyme]-L-cysteine + [acceptor protein]-L-lysine = [E2 ubiquitin-conjugating enzyme]-L-cysteine + N(6)-ubiquitinyl-[acceptor protein]-L-lysine.. The protein operates within protein modification; protein ubiquitination. Functionally, E3 ubiquitin-protein ligase that promotes the degradation of insoluble ubiquitinated proteins, including insoluble PAX6, poly-Gln repeat expanded HTT and poly-Ala repeat expanded ARX. Mediates PAX6 ubiquitination leading to proteasomal degradation, thereby modulating cortical neurogenesis. May also inhibit PAX6 transcriptional activity, possibly in part by preventing the binding of PAX6 to its consensus sequences. May contribute to the regulation of the intracellular level of HN (humanin) or HN-containing proteins through the proteasomal degradation pathway. Mediates MED15 ubiquitination leading to proteasomal degradation. May contribute to the innate restriction of retroviruses. Upon overexpression, reduces HIV-1 and murine leukemia virus infectivity, by suppressing viral gene expression. Antiviral activity depends on a functional E3 ubiquitin-protein ligase domain. May regulate TRIM5 turnover via the proteasome pathway, thus counteracting the TRIM5-mediated cross-species restriction of retroviral infection at early stages of the retroviral life cycle. Acts as an inhibitor of the AIM2 inflammasome by promoting autophagy-dependent degradation of AIM2. Mechanistically, undergoes autoubiquitination upon DNA stimulation, promoting interaction with AIM2 and SQSTM1/p62, leading to AIM2 recruitment to autophagosomes. The chain is E3 ubiquitin-protein ligase TRIM11 (Trim11) from Rattus norvegicus (Rat).